The sequence spans 357 residues: Glycerol-3-phosphate dehydrogenase [NAD(P)+] (357 aa).

4 residues coordinate NADPH: S30, F31, R51, and K124. Sn-glycerol 3-phosphate is bound by residues K124 and G152. An NADPH-binding site is contributed by A156. The sn-glycerol 3-phosphate site is built by K207, D260, S270, R271, and N272. K207 (proton acceptor) is an active-site residue. Residue R271 participates in NADPH binding. NADPH is bound at residue E297.

It belongs to the NAD-dependent glycerol-3-phosphate dehydrogenase family.

It is found in the cytoplasm. It catalyses the reaction sn-glycerol 3-phosphate + NAD(+) = dihydroxyacetone phosphate + NADH + H(+). The enzyme catalyses sn-glycerol 3-phosphate + NADP(+) = dihydroxyacetone phosphate + NADPH + H(+). The protein operates within membrane lipid metabolism; glycerophospholipid metabolism. Functionally, catalyzes the reduction of the glycolytic intermediate dihydroxyacetone phosphate (DHAP) to sn-glycerol 3-phosphate (G3P), the key precursor for phospholipid synthesis. The protein is Glycerol-3-phosphate dehydrogenase [NAD(P)+] of Acinetobacter baumannii (strain SDF).